We begin with the raw amino-acid sequence, 154 residues long: Ribonuclease H (154 aa).

An RNase H type-1 domain is found at 9 to 150; that stretch reads SHPHIIIYTD…ADALANKGVE (142 aa). The Mg(2+) site is built by D18, E56, D78, and D142.

The protein belongs to the RNase H family. In terms of assembly, monomer. The cofactor is Mg(2+).

The protein localises to the cytoplasm. It carries out the reaction Endonucleolytic cleavage to 5'-phosphomonoester.. Functionally, endonuclease that specifically degrades the RNA of RNA-DNA hybrids. The sequence is that of Ribonuclease H from Polynucleobacter asymbioticus (strain DSM 18221 / CIP 109841 / QLW-P1DMWA-1) (Polynucleobacter necessarius subsp. asymbioticus).